A 95-amino-acid polypeptide reads, in one-letter code: Acylphosphatase (95 aa).

The Acylphosphatase-like domain maps to 5–93 (RAHLFIRGKV…GEFQDFRILP (89 aa)). Catalysis depends on residues Arg-20 and Asn-38.

This sequence belongs to the acylphosphatase family.

It carries out the reaction an acyl phosphate + H2O = a carboxylate + phosphate + H(+). In Pyrobaculum arsenaticum (strain DSM 13514 / JCM 11321 / PZ6), this protein is Acylphosphatase (acyP).